The sequence spans 485 residues: Palmitoyltransferase ZDHHC1 (485 aa).

The disordered stretch occupies residues 1–41 (MYKMNICNKPSNKTAPEKSVWTAPAQPSGPSPELQGQRSRR). Over 1 to 52 (MYKMNICNKPSNKTAPEKSVWTAPAQPSGPSPELQGQRSRRNGWSWPPHPLQ) the chain is Cytoplasmic. The segment at 1 to 271 (MYKMNICNKP…GHLLCFHIYL (271 aa)) is mediates interaction with STING1. The helical transmembrane segment at 53–73 (IVAWLLYLFFAVIGFGILVPL) threads the bilayer. Residues 74 to 77 (LPHH) lie on the Lumenal side of the membrane. A helical membrane pass occupies residues 78 to 98 (WVPAGYACMGAIFAGHLVVHL). Residues 99–185 (TAVSIDPADA…YRLFLHSVAS (87 aa)) are Cytoplasmic-facing. The 51-residue stretch at 134-184 (LHCNLCNVDVSARSKHCSACNKCVCGFDHHCKWLNNCVGERNYRLFLHSVA) folds into the DHHC domain. C164 serves as the catalytic S-palmitoyl cysteine intermediate. A helical transmembrane segment spans residues 186-206 (ALLGVLLLVLVATYVFVEFFV). Over 207–241 (NPMRLRTNRHFEVLKNHTDVWFVFLPAAPVETQAP) the chain is Lumenal. Residues 242 to 262 (AILALAALLILLGLLSTALLG) traverse the membrane as a helical segment. Over 263–485 (HLLCFHIYLM…RGRRVRPPFS (223 aa)) the chain is Cytoplasmic. 2 disordered regions span residues 324-358 (EPPGQAGPAAVNAKHSRPASPDPTPGRRDCAGPPV) and 462-485 (LWPPRGAGADSPRWRGRRVRPPFS). Basic residues predominate over residues 475-485 (WRGRRVRPPFS).

This sequence belongs to the DHHC palmitoyltransferase family. Interacts with STING1; ZDHHC1 constitutively interacts with STING1 and in presence of DNA viruses activates it by promoting its cGAMP-induced oligomerization and the recruitment of downstream signaling components. As to expression, widely expressed with significant expression in heart, brain, placenta, lung, liver, kidney, testis, thymus and small intestine. Expressed at lower levels in adult pancreas and lung.

The protein resides in the endosome membrane. It localises to the endoplasmic reticulum membrane. Its subcellular location is the golgi apparatus. It catalyses the reaction L-cysteinyl-[protein] + hexadecanoyl-CoA = S-hexadecanoyl-L-cysteinyl-[protein] + CoA. Functionally, palmitoyltransferase that catalyzes the addition of palmitate onto various protein substrates, such as NCDN and NLRP3. Has a palmitoyltransferase activity toward NCDN and regulates NCDN association with endosome membranes through this palmitoylation. Acts as an activator of the NLRP3 inflammasome by mediating palmitoylation of 'Cys-130' and 'Cys-958' of NLRP3, thereby promoting NLRP3 phosphorylation and activation by NEK7. Its function is as follows. Also has a palmitoyltransferase activity-independent function in DNA virus-triggered and CGAS-mediated innate immune response. Functions as an activator of STING1 by promoting its cGAMP-induced oligomerization and the recruitment of downstream signaling components. This is Palmitoyltransferase ZDHHC1 from Homo sapiens (Human).